The primary structure comprises 460 residues: ATP synthase subunit beta (460 aa).

150–157 (GGAGVGKT) contributes to the ATP binding site.

It belongs to the ATPase alpha/beta chains family. In terms of assembly, F-type ATPases have 2 components, CF(1) - the catalytic core - and CF(0) - the membrane proton channel. CF(1) has five subunits: alpha(3), beta(3), gamma(1), delta(1), epsilon(1). CF(0) has three main subunits: a(1), b(2) and c(9-12). The alpha and beta chains form an alternating ring which encloses part of the gamma chain. CF(1) is attached to CF(0) by a central stalk formed by the gamma and epsilon chains, while a peripheral stalk is formed by the delta and b chains.

It localises to the cell inner membrane. It catalyses the reaction ATP + H2O + 4 H(+)(in) = ADP + phosphate + 5 H(+)(out). Its function is as follows. Produces ATP from ADP in the presence of a proton gradient across the membrane. The catalytic sites are hosted primarily by the beta subunits. This is ATP synthase subunit beta from Yersinia pestis bv. Antiqua (strain Angola).